The sequence spans 1898 residues: Receptor-type tyrosine-protein phosphatase F (1898 aa).

The N-terminal stretch at 1 to 29 (MAPEPAPGRRMVPLVPALVMLGLMAGAHG) is a signal peptide. The Extracellular segment spans residues 30–1254 (DSKPVFVKVP…QQQEEPEMLW (1225 aa)). 3 Ig-like C2-type domains span residues 33 to 123 (PVFV…AKLS), 135 to 224 (PTID…ANLY), and 232 to 314 (PRFS…AQVT). Residues Cys54 and Cys107 are joined by a disulfide bond. 68 to 77 (KKGKKVSSQR) contacts heparin. Asn117 is a glycosylation site (N-linked (GlcNAc...) asparagine). A disulfide bridge connects residues Cys156 and Cys207. N-linked (GlcNAc...) asparagine glycans are attached at residues Asn250 and Asn295. A disulfide bridge links Cys253 with Cys298. 8 consecutive Fibronectin type-III domains span residues 321–411 (PPID…TGEQ), 416–510 (PPRR…TQQG), 514–604 (QPAD…TAQS), 609–706 (PPQK…TDED), 711–810 (PPRK…TTGA), 811–905 (VPGR…PEDA), 909–1001 (FPQN…TMPM), and 1005–1089 (FAKN…TAPD). Positions 693–713 (GPESSPVLVRTDEDVPSGPPR) are disordered. N-linked (GlcNAc...) asparagine glycosylation is present at Asn721. N-linked (GlcNAc...) asparagine glycosylation is found at Asn941 and Asn957. The helical transmembrane segment at 1255–1275 (VTGPVLAVILIILIVIAILLF) threads the bilayer. Residues 1276–1898 (KRKRTHSPSS…YLGSFDHYAT (623 aa)) lie on the Cytoplasmic side of the membrane. Ser1296 carries the post-translational modification Phosphoserine. Tyrosine-protein phosphatase domains follow at residues 1343-1598 (FSQE…LLEA) and 1630-1889 (MELE…ALEY). Substrate contacts are provided by residues Asp1507, 1539 to 1545 (CSAGVGR), and Gln1583. Cys1539 (phosphocysteine intermediate) is an active-site residue. Catalysis depends on Cys1830, which acts as the Phosphocysteine intermediate.

Belongs to the protein-tyrosine phosphatase family. Receptor class 2A subfamily. In terms of assembly, interacts with GRIP1. Interacts with PPFIA1, PPFIA2 and PPFIA3. Interacts with PTPRF.

It is found in the membrane. The enzyme catalyses O-phospho-L-tyrosyl-[protein] + H2O = L-tyrosyl-[protein] + phosphate. Possible cell adhesion receptor. It possesses an intrinsic protein tyrosine phosphatase activity (PTPase) and dephosphorylates EPHA2 regulating its activity. Its function is as follows. The first PTPase domain has enzymatic activity, while the second one seems to affect the substrate specificity of the first one. The protein is Receptor-type tyrosine-protein phosphatase F (Ptprf) of Rattus norvegicus (Rat).